We begin with the raw amino-acid sequence, 592 residues long: LIM domain-binding protein 1 (592 aa).

Disordered regions lie at residues 14 to 41 (GHPP…NSQN) and 305 to 368 (PAPE…NPMT). Polar residues predominate over residues 23-41 (ESSNSHYGMPPSQGTNSQN). Positions 322–344 (PAANPRGSKKATAAAAAAAAAAT) are enriched in low complexity. The span at 352 to 368 (PTASPANNQQFPPNPMT) shows a compositional bias: polar residues. The LIM interaction domain (LID) domain occupies 378 to 417 (DVMVVGEPSMMGSEFGENDERTISRVENSQYDPNAMQMQS). 2 disordered regions span residues 437–458 (HHPG…MGSQ) and 559–592 (GGMQ…MITG). The span at 577 to 586 (GPPPQWPPPN) shows a compositional bias: pro residues.

This sequence belongs to the LDB family. As to quaternary structure, interacts with blmp-1. Expressed in all neurons and some other tissues of the adult, including vulval muscle, and, in males, all the neurons of the tail region. Expressed in vulval cells.

Binds to the LIM domain of LIM domain-containing transcription factors. Required for the blmp-1-mediated transcriptional activation or repression of several hypodermal genes, such as bed-3. Regulates sam-10 nuclear localization in PLM neurons. Has a role in synaptic differentiation of PLM mechanosensory neurons. Involved in gonadogenesis. This is LIM domain-binding protein 1 from Caenorhabditis elegans.